The following is a 365-amino-acid chain: Succinate--CoA ligase [ADP-forming] subunit beta (365 aa).

The region spanning 9-230 (KEIFRAEGIS…EMEEYEPEEF (222 aa)) is the ATP-grasp domain. Residues lysine 45, 52-54 (GRG), glutamate 90, isoleucine 93, and glutamate 98 each bind ATP. Mg(2+)-binding residues include asparagine 190 and aspartate 203. Substrate contacts are provided by residues asparagine 244 and 300–302 (GIT).

Belongs to the succinate/malate CoA ligase beta subunit family. As to quaternary structure, heterotetramer of two alpha and two beta subunits. The cofactor is Mg(2+).

It carries out the reaction succinate + ATP + CoA = succinyl-CoA + ADP + phosphate. It catalyses the reaction GTP + succinate + CoA = succinyl-CoA + GDP + phosphate. It participates in carbohydrate metabolism; tricarboxylic acid cycle; succinate from succinyl-CoA (ligase route): step 1/1. Its function is as follows. Succinyl-CoA synthetase functions in the citric acid cycle (TCA), coupling the hydrolysis of succinyl-CoA to the synthesis of either ATP or GTP and thus represents the only step of substrate-level phosphorylation in the TCA. The beta subunit provides nucleotide specificity of the enzyme and binds the substrate succinate, while the binding sites for coenzyme A and phosphate are found in the alpha subunit. The chain is Succinate--CoA ligase [ADP-forming] subunit beta from Methanothermobacter thermautotrophicus (strain ATCC 29096 / DSM 1053 / JCM 10044 / NBRC 100330 / Delta H) (Methanobacterium thermoautotrophicum).